Here is a 360-residue protein sequence, read N- to C-terminus: Peptide chain release factor 1 (360 aa).

At Gln237 the chain carries N5-methylglutamine.

Belongs to the prokaryotic/mitochondrial release factor family. In terms of processing, methylated by PrmC. Methylation increases the termination efficiency of RF1.

Its subcellular location is the cytoplasm. Peptide chain release factor 1 directs the termination of translation in response to the peptide chain termination codons UAG and UAA. The polypeptide is Peptide chain release factor 1 (Pseudomonas putida (strain GB-1)).